Reading from the N-terminus, the 433-residue chain is GPI mannosyltransferase 2 (433 aa).

Transmembrane regions (helical) follow at residues 4–24 (LVKPVLFFVVVRIVQYAIISL), 109–129 (TAVILENLIYFMAMITLFYLT), 148–165 (ATFTAILFSCNSGSGFFT), 172–194 (LSFLFSFLGILAREFSVTPIIPY), 204–226 (FYYTIVSSFCFTIATLNRSNCIL), 247–267 (ALLFPVLAGCIVALFFVRQQF), 322–342 (IPNFLFGLPTFVILFSSTFYF), 354–374 (LIFITRAFTIIILLFAHVQII), and 410–430 (GYIYWLIFWVPIQTSLFVFFL).

It belongs to the PIGV family.

The protein localises to the endoplasmic reticulum membrane. It participates in glycolipid biosynthesis; glycosylphosphatidylinositol-anchor biosynthesis. Mannosyltransferase involved in glycosylphosphatidylinositol-anchor biosynthesis. Transfers the second mannose to the glycosylphosphatidylinositol during GPI precursor assembly. This Candida glabrata (strain ATCC 2001 / BCRC 20586 / JCM 3761 / NBRC 0622 / NRRL Y-65 / CBS 138) (Yeast) protein is GPI mannosyltransferase 2 (GPI18).